A 517-amino-acid chain; its full sequence is Crotonobetaine/carnitine--CoA ligase (517 aa).

It belongs to the ATP-dependent AMP-binding enzyme family.

The enzyme catalyses 4-(trimethylamino)butanoate + ATP + CoA = 4-(trimethylamino)butanoyl-CoA + AMP + diphosphate. It carries out the reaction crotonobetaine + ATP + CoA = crotonobetainyl-CoA + AMP + diphosphate. The catalysed reaction is (R)-carnitine + ATP + CoA = (R)-carnitinyl-CoA + AMP + diphosphate. It functions in the pathway amine and polyamine metabolism; carnitine metabolism. Its function is as follows. Catalyzes the transfer of CoA to carnitine, generating the initial carnitinyl-CoA needed for the CaiB reaction cycle. Also has activity toward crotonobetaine and gamma-butyrobetaine. The chain is Crotonobetaine/carnitine--CoA ligase from Escherichia coli (strain K12 / MC4100 / BW2952).